Consider the following 294-residue polypeptide: NAD kinase (294 aa).

Aspartate 74 functions as the Proton acceptor in the catalytic mechanism. NAD(+)-binding positions include 74-75, 148-149, histidine 159, arginine 176, aspartate 178, 189-194, and glutamine 249; these read DG, NE, and TAYSLS.

The protein belongs to the NAD kinase family. Requires a divalent metal cation as cofactor.

It is found in the cytoplasm. The catalysed reaction is NAD(+) + ATP = ADP + NADP(+) + H(+). Involved in the regulation of the intracellular balance of NAD and NADP, and is a key enzyme in the biosynthesis of NADP. Catalyzes specifically the phosphorylation on 2'-hydroxyl of the adenosine moiety of NAD to yield NADP. In Vibrio cholerae serotype O1 (strain ATCC 39541 / Classical Ogawa 395 / O395), this protein is NAD kinase.